The chain runs to 287 residues: Phosphatidylserine decarboxylase proenzyme (287 aa).

Catalysis depends on charge relay system; for autoendoproteolytic cleavage activity residues Asp-86, His-143, and Ser-250. Residue Ser-250 is the Schiff-base intermediate with substrate; via pyruvic acid; for decarboxylase activity of the active site. A Pyruvic acid (Ser); by autocatalysis modification is found at Ser-250.

It belongs to the phosphatidylserine decarboxylase family. PSD-B subfamily. Prokaryotic type I sub-subfamily. Heterodimer of a large membrane-associated beta subunit and a small pyruvoyl-containing alpha subunit. Pyruvate serves as cofactor. Post-translationally, is synthesized initially as an inactive proenzyme. Formation of the active enzyme involves a self-maturation process in which the active site pyruvoyl group is generated from an internal serine residue via an autocatalytic post-translational modification. Two non-identical subunits are generated from the proenzyme in this reaction, and the pyruvate is formed at the N-terminus of the alpha chain, which is derived from the carboxyl end of the proenzyme. The autoendoproteolytic cleavage occurs by a canonical serine protease mechanism, in which the side chain hydroxyl group of the serine supplies its oxygen atom to form the C-terminus of the beta chain, while the remainder of the serine residue undergoes an oxidative deamination to produce ammonia and the pyruvoyl prosthetic group on the alpha chain. During this reaction, the Ser that is part of the protease active site of the proenzyme becomes the pyruvoyl prosthetic group, which constitutes an essential element of the active site of the mature decarboxylase.

The protein localises to the cell membrane. It carries out the reaction a 1,2-diacyl-sn-glycero-3-phospho-L-serine + H(+) = a 1,2-diacyl-sn-glycero-3-phosphoethanolamine + CO2. It participates in phospholipid metabolism; phosphatidylethanolamine biosynthesis; phosphatidylethanolamine from CDP-diacylglycerol: step 2/2. Functionally, catalyzes the formation of phosphatidylethanolamine (PtdEtn) from phosphatidylserine (PtdSer). This Wigglesworthia glossinidia brevipalpis protein is Phosphatidylserine decarboxylase proenzyme.